Here is a 345-residue protein sequence, read N- to C-terminus: MTLINPNIQESNKLKFKDESYLDFNSINGGDIRHDWSSEEIKEILDLPLMDLLWRAQIVHRSYNPGYKVQLASLLSVKTGGCSEDCAYCPQSVHNETTVQPNPVIEVESVLDRARAAKDAGADRFCMGWAWREIKDGNAFDSMLEMVRGVRELGLEACVTAGMITDSQASRLAEAGLTAYNHNLDTSPEHYSKIISTRTYQDRLETLRRVRMAGITVCCGGIIGMGESVSDRASLLKVLATLDPHPESVPINALVAVEGTPMEDLSSIDPLEMVRMVATARVIMPKSRIRLSAGRQQLGREAQILCLQSGADSIFYGDTLLTTSNPEVEADRKLLADAGITANFS.

In terms of domain architecture, Radical SAM core spans 67-295 (YKVQLASLLS…KSRIRLSAGR (229 aa)). [4Fe-4S] cluster-binding residues include Cys82, Cys86, and Cys89. Cys126, Cys158, Cys218, and Arg290 together coordinate [2Fe-2S] cluster.

This sequence belongs to the radical SAM superfamily. Biotin synthase family. In terms of assembly, homodimer. The cofactor is [4Fe-4S] cluster. [2Fe-2S] cluster serves as cofactor.

The catalysed reaction is (4R,5S)-dethiobiotin + (sulfur carrier)-SH + 2 reduced [2Fe-2S]-[ferredoxin] + 2 S-adenosyl-L-methionine = (sulfur carrier)-H + biotin + 2 5'-deoxyadenosine + 2 L-methionine + 2 oxidized [2Fe-2S]-[ferredoxin]. The protein operates within cofactor biosynthesis; biotin biosynthesis; biotin from 7,8-diaminononanoate: step 2/2. Functionally, catalyzes the conversion of dethiobiotin (DTB) to biotin by the insertion of a sulfur atom into dethiobiotin via a radical-based mechanism. This chain is Biotin synthase, found in Prochlorococcus marinus (strain NATL1A).